The primary structure comprises 419 residues: Dual specificity mitogen-activated protein kinase kinase 7 (419 aa).

Ala-2 bears the N-acetylalanine mark. Positions 2–30 form a coiled coil; the sequence is AASSLEQKLSRLEAKLKQENREARRRIDL. Positions 18–30 are enriched in basic and acidic residues; that stretch reads KQENREARRRIDL. The interval 18–76 is disordered; it reads KQENREARRRIDLNLDISPQRPRPTLQLPLANDGGSRSPSSESSPQHPTPPARPRHMLG. A compositionally biased stretch (low complexity) spans 36-63; it reads PQRPRPTLQLPLANDGGSRSPSSESSPQ. Positions 37 to 57 are d domain; the sequence is QRPRPTLQLPLANDGGSRSPS. The Protein kinase domain maps to 120-380; it reads LENLGEMGSG…YNKLLEHSFI (261 aa). Residues 126–134 and Lys-149 each bind ATP; that span reads MGSGTCGQV. The active-site Proton acceptor is the Asp-243. Ser-271 carries the phosphoserine; by MAP3K modification. Thr-275 is modified (phosphothreonine; by MAP3K). Residues 377 to 400 form a DVD domain region; it reads HSFIKRYETLEVDVASWFKDVMAK. Ser-411 is subject to Phosphoserine.

This sequence belongs to the protein kinase superfamily. STE Ser/Thr protein kinase family. MAP kinase kinase subfamily. In terms of assembly, interacts with isoform 1 of VRK2. Interacts (via its D domain) with its substrates MAPK8/JNK1, MAPK9/JNK2 and MAPK10/JNK3. Interacts (via its DVD domain) with MAP3Ks activators like MAP3K5/ASK1 and MAP3K1/MEKK1. Interacts with MAPK8IP1/JIP1, MAPK8IP2/JIP2 and MAPK8IP3/JIP3 scaffold proteins. Interacts with RASSF7, the interaction promotes phosphorylation. Found in a complex with SH3RF1, RAC1, MAP3K11/MLK3, MAPK8IP1/JIP1 and MAPK8/JNK1. Found in a complex with SH3RF1, RAC2, MAP3K7/TAK1, MAPK8IP1/JIP1, MAPK8/JNK1 and MAPK9/JNK2. The cofactor is Mg(2+). In terms of processing, activated by phosphorylation on Ser-271 and Thr-275 by MAP kinase kinase kinases (MAP3Ks). Ubiquitous; with highest level of expression in skeletal muscle. Isoform 3 is found at low levels in placenta, fetal liver, and skeletal muscle.

It localises to the nucleus. Its subcellular location is the cytoplasm. It carries out the reaction L-seryl-[protein] + ATP = O-phospho-L-seryl-[protein] + ADP + H(+). The enzyme catalyses L-threonyl-[protein] + ATP = O-phospho-L-threonyl-[protein] + ADP + H(+). It catalyses the reaction L-tyrosyl-[protein] + ATP = O-phospho-L-tyrosyl-[protein] + ADP + H(+). Its activity is regulated as follows. Activated by phosphorylation by specific MAP kinase kinase kinases such as MAP3K1/MEKK1, MAP3K3/MEKK3, MAP3K11/MLK3 and MAP3K12/DLK. Its function is as follows. Dual specificity protein kinase which acts as an essential component of the MAP kinase signal transduction pathway. Essential component of the stress-activated protein kinase/c-Jun N-terminal kinase (SAP/JNK) signaling pathway. With MAP2K4/MKK4, is the one of the only known kinase to directly activate the stress-activated protein kinase/c-Jun N-terminal kinases MAPK8/JNK1, MAPK9/JNK2 and MAPK10/JNK3. MAP2K4/MKK4 and MAP2K7/MKK7 both activate the JNKs by phosphorylation, but they differ in their preference for the phosphorylation site in the Thr-Pro-Tyr motif. MAP2K4/MKK4 shows preference for phosphorylation of the Tyr residue and MAP2K7/MKK7 for the Thr residue. The monophosphorylation of JNKs on the Thr residue is sufficient to increase JNK activity indicating that MAP2K7/MKK7 is important to trigger JNK activity, while the additional phosphorylation of the Tyr residue by MAP2K4/MKK4 ensures optimal JNK activation. Has a specific role in JNK signal transduction pathway activated by pro-inflammatory cytokines. The MKK/JNK signaling pathway is also involved in mitochondrial death signaling pathway, including the release cytochrome c, leading to apoptosis. Part of a non-canonical MAPK signaling pathway, composed of the upstream MAP3K12 kinase and downstream MAP kinases MAPK1/ERK2 and MAPK3/ERK1, that enhances the AP-1-mediated transcription of APP in response to APOE. The protein is Dual specificity mitogen-activated protein kinase kinase 7 (MAP2K7) of Homo sapiens (Human).